Consider the following 116-residue polypeptide: Vesicle-associated membrane protein 2 (116 aa).

Positions 1–33 are disordered; the sequence is MSATAATAPPAAPAGEGGPPAPPPNLTSNRRLQ. Residue serine 2 is modified to N-acetylserine. The Cytoplasmic portion of the chain corresponds to 2–94; it reads SATAATAPPA…KRKYWWKNLK (93 aa). Residues 31–91 form the v-SNARE coiled-coil homology domain; it reads RLQQTQAQVD…AKLKRKYWWK (61 aa). The tract at residues 92–116 is required for interaction with SEPT8; it reads NLKMMIILGVICAIILIIIIVYFSS. Residues 95–114 traverse the membrane as a helical; Anchor for type IV membrane protein segment; that stretch reads MMIILGVICAIILIIIIVYF. Residues 115-116 are Vesicular-facing; sequence SS.

It belongs to the synaptobrevin family. As to quaternary structure, part of the SNARE core complex containing SNAP25, VAMP2 and STX1A; this complex constitutes the basic catalytic machinery of the complex neurotransmitter release apparatus. Recruited to the SNARE complex following binding of the SNARE complex component STX1A to STXBP1. This complex binds to CPLX1. Interacts with POPDC1 and STX4. Interacts with VAPA and VAPB. Interacts with WDFY2, PRKCZ and PRKCI. Forms a complex with WDFY2 and PRKCZ. Interacts (via N-terminus) with KCNB1 (via N-terminus and C-terminus); stimulates the channel inactivation rate of KCNB1. Interacts with SEPT8; the interaction inhibits interaction of VAMP2 with SYP. Interacts with SYP; the interaction is inhibited by interaction with SEPT8. Interacts with PICALM. Interacts with alpha-synuclein/SNCA. Interacts with STX3. Phosphorylated by PRKCZ in vitro and this phosphorylation is increased in the presence of WDFY2.

Its subcellular location is the cytoplasmic vesicle. It localises to the secretory vesicle. The protein localises to the synaptic vesicle membrane. The protein resides in the cell membrane. In terms of biological role, involved in the targeting and/or fusion of transport vesicles to their target membrane. Major SNARE protein of synaptic vesicles which mediates fusion of synaptic vesicles to release neurotransmitters. Essential for fast vesicular exocytosis and activity-dependent neurotransmitter release as well as fast endocytosis that mediates rapid reuse of synaptic vesicles. Modulates the gating characteristics of the delayed rectifier voltage-dependent potassium channel KCNB1. This Bos taurus (Bovine) protein is Vesicle-associated membrane protein 2 (VAMP2).